The chain runs to 64 residues: Large ribosomal subunit protein bL28 (64 aa).

This sequence belongs to the bacterial ribosomal protein bL28 family.

This Campylobacter jejuni subsp. jejuni serotype O:6 (strain 81116 / NCTC 11828) protein is Large ribosomal subunit protein bL28.